The following is a 397-amino-acid chain: Succinate--CoA ligase [ADP-forming] subunit beta (397 aa).

Positions 9-254 constitute an ATP-grasp domain; that stretch reads KALLREFGVP…ESEEDAKEIE (246 aa). ATP is bound by residues Lys-46, 53-55, Glu-109, Ser-112, and Glu-117; that span reads GRG. 2 residues coordinate Mg(2+): Asn-209 and Asp-223. Substrate-binding positions include Asn-274 and 331–333; that span reads GIM.

Belongs to the succinate/malate CoA ligase beta subunit family. Heterotetramer of two alpha and two beta subunits. It depends on Mg(2+) as a cofactor.

The catalysed reaction is succinate + ATP + CoA = succinyl-CoA + ADP + phosphate. The enzyme catalyses GTP + succinate + CoA = succinyl-CoA + GDP + phosphate. It participates in carbohydrate metabolism; tricarboxylic acid cycle; succinate from succinyl-CoA (ligase route): step 1/1. Succinyl-CoA synthetase functions in the citric acid cycle (TCA), coupling the hydrolysis of succinyl-CoA to the synthesis of either ATP or GTP and thus represents the only step of substrate-level phosphorylation in the TCA. The beta subunit provides nucleotide specificity of the enzyme and binds the substrate succinate, while the binding sites for coenzyme A and phosphate are found in the alpha subunit. In Nitrobacter hamburgensis (strain DSM 10229 / NCIMB 13809 / X14), this protein is Succinate--CoA ligase [ADP-forming] subunit beta.